The chain runs to 332 residues: Procathepsin L (332 aa).

Positions 1-17 are cleaved as a signal peptide; that stretch reads MHPLLFLAGLCLGVASA. Positions 18-112 are cleaved as a propeptide — activation peptide; that stretch reads APQLYQSLDA…KVFQAPFFVE (95 aa). Glutamate 121 lines the Zn(2+) pocket. Residue cysteine 137 is part of the active site. Glutamate 162, aspartate 183, glutamate 198, and aspartate 208 together coordinate Zn(2+). An intrachain disulfide couples cysteine 168 to cysteine 210. An N-linked (GlcNAc...) asparagine glycan is attached at asparagine 220. Zn(2+) contacts are provided by aspartate 226, aspartate 249, aspartate 272, and aspartate 274. Cysteines 268 and 321 form a disulfide. Histidine 275 is an active-site residue. Residues 288-290 constitute a propeptide that is removed on maturation; that stretch reads ETE. Asparagine 299 is a catalytic residue.

Belongs to the peptidase C1 family. In terms of assembly, dimer of a heavy and a light chain linked by disulfide bonds. Interacts with Long isoform of CD74/Ii chain; the interaction stabilizes the conformation of mature CTSL. During export along the endocytic pathway, pro-CTSL undergoes several proteolytic cleavages to generate the CTSL single-chain and two-chain mature forms, composed of a heavy chain linked to a light chain by disulfide bonds. Autocleavage; produces the single-chain CTSL after cleavage of the propeptide. The cleavage can be intermolecular. Expressed in the endometrium.

The protein localises to the lysosome. The protein resides in the apical cell membrane. It localises to the cytoplasmic vesicle. Its subcellular location is the secretory vesicle. It is found in the chromaffin granule. The protein localises to the secreted. The protein resides in the extracellular space. The enzyme catalyses Specificity close to that of papain. As compared to cathepsin B, cathepsin L exhibits higher activity toward protein substrates, but has little activity on Z-Arg-Arg-NHMec, and no peptidyl-dipeptidase activity.. Its activity is regulated as follows. Inhibited by the propeptide produced by autocleavage. Long isoform of CD74/Ii chain stabilizes the conformation of mature CTSL by binding to its active site and serving as a chaperone to help maintain a pool of mature enzyme in endocytic compartments and extracellular space of APCs. IFNG enhances the conversion into the CTSL mature and active form. Inhibited by CST6. Inhibited by the glycopeptide antibiotic teicoplanin. Inhibited by amantadine. Thiol protease important for the overall degradation of proteins in lysosomes. Plays a critical for normal cellular functions such as general protein turnover, antigen processing and bone remodeling. Involved in the solubilization of cross-linked TG/thyroglobulin and in the subsequent release of thyroid hormone thyroxine (T4) by limited proteolysis of TG/thyroglobulin in the thyroid follicle lumen. In neuroendocrine chromaffin cells secretory vesicles, catalyzes the prohormone proenkephalin processing to the active enkephalin peptide neurotransmitter. In thymus, regulates CD4(+) T cell positive selection by generating the major histocompatibility complex class II (MHCII) bound peptide ligands presented by cortical thymic epithelial cells. Also mediates invariant chain processing in cortical thymic epithelial cells. Major elastin-degrading enzyme at neutral pH. Accumulates as a mature and active enzyme in the extracellular space of antigen presenting cells (APCs) to regulate degradation of the extracellular matrix in the course of inflammation. Secreted form generates endostatin from COL18A1. Critical for cardiac morphology and function. Plays an important role in hair follicle morphogenesis and cycling, as well as epidermal differentiation. Required for maximal stimulation of steroidogenesis by TIMP1. The polypeptide is Procathepsin L (CTSL) (Felis catus (Cat)).